The primary structure comprises 435 residues: 3-ketoacyl-CoA thiolase (435 aa).

C98 (acyl-thioester intermediate) is an active-site residue. Residues H391 and C421 each act as proton acceptor in the active site.

It belongs to the thiolase-like superfamily. Thiolase family. As to quaternary structure, heterotetramer of two alpha chains (FadJ) and two beta chains (FadI).

Its subcellular location is the cytoplasm. It carries out the reaction an acyl-CoA + acetyl-CoA = a 3-oxoacyl-CoA + CoA. Its pathway is lipid metabolism; fatty acid beta-oxidation. Functionally, catalyzes the final step of fatty acid oxidation in which acetyl-CoA is released and the CoA ester of a fatty acid two carbons shorter is formed. The polypeptide is 3-ketoacyl-CoA thiolase (Colwellia psychrerythraea (strain 34H / ATCC BAA-681) (Vibrio psychroerythus)).